Consider the following 126-residue polypeptide: uncharacterized protein (126 aa).

The disordered stretch occupies residues methionine 1 to glutamate 101. 2 stretches are compositionally biased toward polar residues: residues glycine 14–proline 27 and aspartate 86–alanine 99.

This is an uncharacterized protein from Schizosaccharomyces pombe (strain 972 / ATCC 24843) (Fission yeast).